We begin with the raw amino-acid sequence, 475 residues long: MSPQTETKASVGFKAGVKDYKLTYYTPDYETKDTDILAAFRVTPQPGVPPEEAGAAVAAESSTGTWTTVWTDGLTSLDRYKGRCYGLEPVAGEENQYIAYVAYPLDLFEEGSVTNMFTSIVGNVFGFKALRALRLEDLRIPTAYIKTFQGPPHGIQVERDKLNKYGRPLLGCTIKPKLGLSAKNYGRAVYECLRGGLDFTKDDENVNSQPFMRWRDRFLFCAEAIFKSQAETGEIKGHYLNATAGTCEEMMKRAVFARELGVPIVMHDYLTGGFTANTSLAHYCRDNGLLLHIHRAMHAVIDRQKNHGMHFRVLAKALRLSGGDHVHAGTVVGKLEGEREITLGFVDLLRDDFVEKDRSRGIYFTQDWVSLPGVLPVASGGIHVWHMPALTEIFGDDSVLQFGGGTLGHPWGNAPGAVANRVALEACVQARNEGRDLAREGNEIIREASKWSPELAAACEVWKEIKFEFEAMDTL.

Positions 1-2 (MS) are excised as a propeptide. N-acetylproline is present on Pro3. At Lys14 the chain carries N6,N6,N6-trimethyllysine. 2 residues coordinate substrate: Asn123 and Thr173. Catalysis depends on Lys175, which acts as the Proton acceptor. Lys177 is a substrate binding site. Mg(2+) is bound by residues Lys201, Asp203, and Glu204. Lys201 carries the N6-carboxylysine modification. His294 acts as the Proton acceptor in catalysis. Substrate is bound by residues Arg295, His327, and Ser379.

Belongs to the RuBisCO large chain family. Type I subfamily. As to quaternary structure, heterohexadecamer of 8 large chains and 8 small chains; disulfide-linked. The disulfide link is formed within the large subunit homodimers. Mg(2+) is required as a cofactor. Post-translationally, the disulfide bond which can form in the large chain dimeric partners within the hexadecamer appears to be associated with oxidative stress and protein turnover.

Its subcellular location is the plastid. It is found in the chloroplast. The enzyme catalyses 2 (2R)-3-phosphoglycerate + 2 H(+) = D-ribulose 1,5-bisphosphate + CO2 + H2O. It carries out the reaction D-ribulose 1,5-bisphosphate + O2 = 2-phosphoglycolate + (2R)-3-phosphoglycerate + 2 H(+). In terms of biological role, ruBisCO catalyzes two reactions: the carboxylation of D-ribulose 1,5-bisphosphate, the primary event in carbon dioxide fixation, as well as the oxidative fragmentation of the pentose substrate in the photorespiration process. Both reactions occur simultaneously and in competition at the same active site. This Glycine max (Soybean) protein is Ribulose bisphosphate carboxylase large chain (rbcL).